A 651-amino-acid chain; its full sequence is UvrABC system protein B (651 aa).

The region spanning 25-411 (RGISCGAKEQ…TGGVATEQLI (387 aa)) is the Helicase ATP-binding domain. 38-45 (GVTGSGKT) serves as a coordination point for ATP. The short motif at 91–114 (YYDYYQPEAYIPQSDVYIEKDALI) is the Beta-hairpin element. In terms of domain architecture, Helicase C-terminal spans 427–591 (DGQIHDVMCE…IVPRTIQKPV (165 aa)). The segment at 593–615 (TSLSERVGSSRKKVSRDTNTDPA) is disordered. The region spanning 616–651 (NRDIVELQKEMLLCAENLDFERAVEIRNEIKRLTAP) is the UVR domain.

The protein belongs to the UvrB family. Forms a heterotetramer with UvrA during the search for lesions. Interacts with UvrC in an incision complex.

It localises to the cytoplasm. The UvrABC repair system catalyzes the recognition and processing of DNA lesions. A damage recognition complex composed of 2 UvrA and 2 UvrB subunits scans DNA for abnormalities. Upon binding of the UvrA(2)B(2) complex to a putative damaged site, the DNA wraps around one UvrB monomer. DNA wrap is dependent on ATP binding by UvrB and probably causes local melting of the DNA helix, facilitating insertion of UvrB beta-hairpin between the DNA strands. Then UvrB probes one DNA strand for the presence of a lesion. If a lesion is found the UvrA subunits dissociate and the UvrB-DNA preincision complex is formed. This complex is subsequently bound by UvrC and the second UvrB is released. If no lesion is found, the DNA wraps around the other UvrB subunit that will check the other stand for damage. This Anaplasma marginale (strain St. Maries) protein is UvrABC system protein B.